The sequence spans 266 residues: Glucosamine-6-phosphate deaminase (266 aa).

Aspartate 72 acts as the Proton acceptor; for enolization step in catalysis. The active-site For ring-opening step is the aspartate 141. Residue histidine 143 is the Proton acceptor; for ring-opening step of the active site. Glutamate 148 acts as the For ring-opening step in catalysis.

It belongs to the glucosamine/galactosamine-6-phosphate isomerase family. NagB subfamily. In terms of assembly, homohexamer.

It carries out the reaction alpha-D-glucosamine 6-phosphate + H2O = beta-D-fructose 6-phosphate + NH4(+). The protein operates within amino-sugar metabolism; N-acetylneuraminate degradation; D-fructose 6-phosphate from N-acetylneuraminate: step 5/5. Allosterically activated by N-acetylglucosamine 6-phosphate (GlcNAc6P). In terms of biological role, catalyzes the reversible isomerization-deamination of glucosamine 6-phosphate (GlcN6P) to form fructose 6-phosphate (Fru6P) and ammonium ion. This is Glucosamine-6-phosphate deaminase from Klebsiella pneumoniae subsp. pneumoniae (strain ATCC 700721 / MGH 78578).